The primary structure comprises 208 residues: Protein-L-isoaspartate O-methyltransferase (208 aa).

S59 is a catalytic residue.

Belongs to the methyltransferase superfamily. L-isoaspartyl/D-aspartyl protein methyltransferase family.

It localises to the cytoplasm. The catalysed reaction is [protein]-L-isoaspartate + S-adenosyl-L-methionine = [protein]-L-isoaspartate alpha-methyl ester + S-adenosyl-L-homocysteine. Its function is as follows. Catalyzes the methyl esterification of L-isoaspartyl residues in peptides and proteins that result from spontaneous decomposition of normal L-aspartyl and L-asparaginyl residues. It plays a role in the repair and/or degradation of damaged proteins. The polypeptide is Protein-L-isoaspartate O-methyltransferase (Erwinia tasmaniensis (strain DSM 17950 / CFBP 7177 / CIP 109463 / NCPPB 4357 / Et1/99)).